Here is a 250-residue protein sequence, read N- to C-terminus: 2,3-bisphosphoglycerate-dependent phosphoglycerate mutase (250 aa).

Residues 10 to 17 (RHGESQWN), 23 to 24 (TG), Arg-62, 89 to 92 (ERHY), Lys-100, 116 to 117 (RR), and 185 to 186 (GN) each bind substrate. His-11 acts as the Tele-phosphohistidine intermediate in catalysis. The active-site Proton donor/acceptor is the Glu-89.

The protein belongs to the phosphoglycerate mutase family. BPG-dependent PGAM subfamily. Homodimer.

It carries out the reaction (2R)-2-phosphoglycerate = (2R)-3-phosphoglycerate. The protein operates within carbohydrate degradation; glycolysis; pyruvate from D-glyceraldehyde 3-phosphate: step 3/5. Functionally, catalyzes the interconversion of 2-phosphoglycerate and 3-phosphoglycerate. The sequence is that of 2,3-bisphosphoglycerate-dependent phosphoglycerate mutase from Pectobacterium atrosepticum (strain SCRI 1043 / ATCC BAA-672) (Erwinia carotovora subsp. atroseptica).